A 106-amino-acid polypeptide reads, in one-letter code: N(2)-fixation sustaining protein CowN (106 aa).

It belongs to the CowN family.

Its function is as follows. Is required to sustain N(2)-dependent growth in the presence of low levels of carbon monoxide (CO). Probably acts by protecting the N(2) fixation ability of the nitrogenase complex, which is inactivated in the presence of CO. The polypeptide is N(2)-fixation sustaining protein CowN (Denitrovibrio acetiphilus (strain DSM 12809 / NBRC 114555 / N2460)).